The following is a 620-amino-acid chain: Probable potassium transport system protein Kup (620 aa).

12 consecutive transmembrane segments (helical) span residues 11–31 (LAFLAMGIVYGDIGTSPLYAF), 51–71 (ILSLVFWAFVLIVSIKYLLLV), 100–120 (IAMLLGILATGFFFGEAVITP), 138–158 (LAPYVLPIAMMIIVALFAVQA), 167–187 (FFAPVMLLWFLVLALLGAHAI), 202–222 (AVHFVLLHGQHTLFILGLVVL), 246–266 (WFALVMPSLLLNYFGQGAYLL), 288–308 (LILLATFATVIASQAVISGIF), 334–354 (GQIYVPAANMLLFVAVIFVML), 364–384 (AAYGIAVTAIMMISSLLLVLV), 396–416 (VVTIGIAFIGMDTLLLASTST), and 418–438 (LMEGGWLPLLLGCVVFIVMYI).

The protein belongs to the HAK/KUP transporter (TC 2.A.72) family.

The protein localises to the cell inner membrane. It catalyses the reaction K(+)(in) + H(+)(in) = K(+)(out) + H(+)(out). Transport of potassium into the cell. Likely operates as a K(+):H(+) symporter. This chain is Probable potassium transport system protein Kup, found in Vibrio cholerae serotype O1 (strain ATCC 39541 / Classical Ogawa 395 / O395).